The chain runs to 471 residues: Threonine--tRNA ligase catalytic subunit (471 aa).

Positions 8-333 (THIDYAYELD…YLEHRRGRMP (326 aa)) are catalytic. Zn(2+) is bound by residues Cys112, His166, and His310.

It belongs to the class-II aminoacyl-tRNA synthetase family. As to quaternary structure, homodimer. Probably interacts with its editing subunit. The cofactor is Zn(2+).

Its subcellular location is the cytoplasm. It carries out the reaction tRNA(Thr) + L-threonine + ATP = L-threonyl-tRNA(Thr) + AMP + diphosphate + H(+). Catalyzes the attachment of threonine to tRNA(Thr) in a two-step reaction: L-threonine is first activated by ATP to form Thr-AMP and then transferred to the acceptor end of tRNA(Thr). This protein is probably not able to deacylate mischarged L-seryl-tRNA(Thr) as it lacks the appropriate domain. The polypeptide is Threonine--tRNA ligase catalytic subunit (Aeropyrum pernix (strain ATCC 700893 / DSM 11879 / JCM 9820 / NBRC 100138 / K1)).